Consider the following 362-residue polypeptide: F-box protein At2g14710 (362 aa).

Residues 1–47 enclose the F-box domain; the sequence is MAHLKNLPWELIEEILSRVPPKSLVRFRTVSKQWNALFDDKTFINNH.

The polypeptide is F-box protein At2g14710 (Arabidopsis thaliana (Mouse-ear cress)).